An 855-amino-acid polypeptide reads, in one-letter code: DNA mismatch repair protein MutS (855 aa).

616 to 623 (GPNMGGKS) lines the ATP pocket.

The protein belongs to the DNA mismatch repair MutS family.

Functionally, this protein is involved in the repair of mismatches in DNA. It is possible that it carries out the mismatch recognition step. This protein has a weak ATPase activity. The protein is DNA mismatch repair protein MutS of Salmonella dublin (strain CT_02021853).